Here is a 323-residue protein sequence, read N- to C-terminus: GTP 3',8-cyclase (323 aa).

Positions 4-233 (KYGREIDYLR…NGPAKYISIE (230 aa)) constitute a Radical SAM core domain. Arg-13 provides a ligand contact to GTP. Cys-20 and Cys-24 together coordinate [4Fe-4S] cluster. Residue Tyr-26 coordinates S-adenosyl-L-methionine. Cys-27 is a binding site for [4Fe-4S] cluster. Residue Arg-63 coordinates GTP. Gly-67 contacts S-adenosyl-L-methionine. Thr-94 lines the GTP pocket. Position 118 (Ser-118) interacts with S-adenosyl-L-methionine. Lys-154 is a binding site for GTP. Met-188 is an S-adenosyl-L-methionine binding site. [4Fe-4S] cluster is bound by residues Cys-250 and Cys-253. 255–257 (RIR) lines the GTP pocket. Cys-267 serves as a coordination point for [4Fe-4S] cluster.

Belongs to the radical SAM superfamily. MoaA family. In terms of assembly, monomer and homodimer. [4Fe-4S] cluster is required as a cofactor.

The enzyme catalyses GTP + AH2 + S-adenosyl-L-methionine = (8S)-3',8-cyclo-7,8-dihydroguanosine 5'-triphosphate + 5'-deoxyadenosine + L-methionine + A + H(+). Its pathway is cofactor biosynthesis; molybdopterin biosynthesis. Catalyzes the cyclization of GTP to (8S)-3',8-cyclo-7,8-dihydroguanosine 5'-triphosphate. The polypeptide is GTP 3',8-cyclase (Clostridium perfringens (strain 13 / Type A)).